The sequence spans 126 residues: Protein Wnt-1 (126 aa).

S1 is lipidated: O-palmitoleoyl serine; by PORCN. Cysteines 92 and 107 form a disulfide. N-linked (GlcNAc...) asparagine glycans are attached at residues N93 and N123.

The protein belongs to the Wnt family. In terms of processing, palmitoleoylation is required for efficient binding to frizzled receptors. Palmitoleoylation is necessary for proper trafficking to cell surface. Depalmitoleoylated by NOTUM, leading to inhibit Wnt signaling pathway.

The protein resides in the secreted. The protein localises to the extracellular space. It is found in the extracellular matrix. Its function is as follows. Ligand for members of the frizzled family of seven transmembrane receptors. Acts in the canonical Wnt signaling pathway by promoting beta-catenin-dependent transcriptional activation. Plays an essential role in the development of the embryonic brain and central nervous system (CNS). Has a role in osteoblast function, bone development and bone homeostasis. In Plestiodon skiltonianus (Western skink), this protein is Protein Wnt-1 (WNT-1).